The sequence spans 490 residues: Beta-1,3-glucan-binding protein 1 (490 aa).

The signal sequence occupies residues 1–19 (MYKQTVVIFLLCFFICVSC). The region spanning 20–119 (YEVPPAKLEA…GEWTVTGYVD (100 aa)) is the CBM39 domain. The GH16 domain maps to 152 to 490 (PPTSQNTYPC…QVDYVRVYAL (339 aa)). A glycan (N-linked (GlcNAc...) asparagine) is linked at Asn-372.

This sequence belongs to the insect beta-1,3-glucan binding protein family. Monomer. As to expression, hemolymph.

The protein resides in the secreted. Functionally, plays a role in the recognition of invading microorganisms activating the phenoloxidase cascade. Binds specifically to beta-1,3-glucan. Binds the Aspergillus niger cell wall component alpha-1,3-glucan, a fungal pathogen-associated molecular pattern (PAMP) that activates the host immune response. This chain is Beta-1,3-glucan-binding protein 1, found in Galleria mellonella (Greater wax moth).